The primary structure comprises 122 residues: MIQAESRLRVADNTGARELLCIRVLGGSRKRYAGVGDIIVATVKEAIPDGMVKKGEVVKAVVVRTKKETRRPDGSYIKFDENAAVLIDKANNPRGTRIFGPVARELREKNFMKIISLAPEVL.

It belongs to the universal ribosomal protein uL14 family. As to quaternary structure, part of the 50S ribosomal subunit. Forms a cluster with proteins L3 and L19. In the 70S ribosome, L14 and L19 interact and together make contacts with the 16S rRNA in bridges B5 and B8.

Functionally, binds to 23S rRNA. Forms part of two intersubunit bridges in the 70S ribosome. The protein is Large ribosomal subunit protein uL14 of Halothermothrix orenii (strain H 168 / OCM 544 / DSM 9562).